Consider the following 581-residue polypeptide: NADH-quinone oxidoreductase subunit C/D (581 aa).

The NADH dehydrogenase I subunit C stretch occupies residues 1 to 172; that stretch reads MSAVELVNEL…PPFVMTAARF (172 aa). The NADH dehydrogenase I subunit D stretch occupies residues 196–581; it reads ELMILNYGPH…IDYVMSDVDR (386 aa).

This sequence in the N-terminal section; belongs to the complex I 30 kDa subunit family. The protein in the C-terminal section; belongs to the complex I 49 kDa subunit family. As to quaternary structure, NDH-1 is composed of 13 different subunits. Subunits NuoB, CD, E, F, and G constitute the peripheral sector of the complex.

The protein localises to the cell inner membrane. The enzyme catalyses a quinone + NADH + 5 H(+)(in) = a quinol + NAD(+) + 4 H(+)(out). Its function is as follows. NDH-1 shuttles electrons from NADH, via FMN and iron-sulfur (Fe-S) centers, to quinones in the respiratory chain. The immediate electron acceptor for the enzyme in this species is believed to be ubiquinone. Couples the redox reaction to proton translocation (for every two electrons transferred, four hydrogen ions are translocated across the cytoplasmic membrane), and thus conserves the redox energy in a proton gradient. The sequence is that of NADH-quinone oxidoreductase subunit C/D from Rhodopseudomonas palustris (strain BisB18).